The chain runs to 728 residues: Golgin subfamily A member 5 (728 aa).

Serine 2 carries the post-translational modification N-acetylserine. Topologically, residues 2–695 (SWFADLAGRA…IFLRRYPIAR (694 aa)) are cytoplasmic. Arginine 27 and arginine 89 each carry dimethylated arginine. Positions 88–202 (SRTGGDASHP…KKSTEESTVS (115 aa)) are disordered. Residue serine 116 is modified to Phosphoserine. The segment covering 134-146 (PTGRVEIKKEKGK) has biased composition (basic and acidic residues). Low complexity predominate over residues 152-167 (SSQSSAVSSVTTSVTT). Residues 173–187 (ENSGSQSPEVSSSDS) show a composition bias toward polar residues. Residues 216–628 (GSMSHELSNL…LEQQLHSAAT (413 aa)) adopt a coiled-coil conformation. The chain crosses the membrane as a helical; Anchor for type IV membrane protein span at residues 696-716 (VFVIIYMALLHLWVMIVLLTY). Topologically, residues 717–728 (SPEMHHDQPYGK) are lumenal.

As to quaternary structure, homodimer. Interacts with RAB1A that has been activated by GTP-binding. Interacts with isoform CASP of CUX1. Highly phosphorylated during mitosis. Phosphorylation is barely detectable during interphase.

It is found in the golgi apparatus membrane. Involved in maintaining Golgi structure. Stimulates the formation of Golgi stacks and ribbons. Involved in intra-Golgi retrograde transport. The protein is Golgin subfamily A member 5 (Golga5) of Rattus norvegicus (Rat).